We begin with the raw amino-acid sequence, 537 residues long: Chaperonin GroEL (537 aa).

Residues 29–32 (TLGP), 86–90 (DGTTT), Gly-413, 477–479 (NAA), and Asp-493 each bind ATP.

It belongs to the chaperonin (HSP60) family. As to quaternary structure, forms a cylinder of 14 subunits composed of two heptameric rings stacked back-to-back. Interacts with the co-chaperonin GroES.

The protein localises to the cytoplasm. It catalyses the reaction ATP + H2O + a folded polypeptide = ADP + phosphate + an unfolded polypeptide.. Functionally, together with its co-chaperonin GroES, plays an essential role in assisting protein folding. The GroEL-GroES system forms a nano-cage that allows encapsulation of the non-native substrate proteins and provides a physical environment optimized to promote and accelerate protein folding. The chain is Chaperonin GroEL from Lactobacillus delbrueckii subsp. bulgaricus (strain ATCC 11842 / DSM 20081 / BCRC 10696 / JCM 1002 / NBRC 13953 / NCIMB 11778 / NCTC 12712 / WDCM 00102 / Lb 14).